The following is a 332-amino-acid chain: MSVLTLDFTKFHSGSEVERRAFGQALLDGFTTTGFVKLINHGFSKEEMADIFNWNQRFFDLPIDRKAAIRNDEGPKPQRGWSSLGAEKTGFLNPGGKLSLARASNNDRQDAKEHFDIGPAEDEEFQNKWPEEQTLPGFQETMNSYFDRSQAITLELLEALALAMDVPKDTFVGLCHGHASELRLNHYPSIPVKTIEEGKTNRIWPHTDFGIITLLAQDDIGGLEIQDRNHPSDFLPVNREDSTEFVVNIGDILERWTNGRLRAGLHQVTTPRSMQQKGNGTLPTRRSVAFFLKPHRQMSVASISHFVPGNQSPRYEDMTALAYQQLRTGIVY.

The Fe2OG dioxygenase domain maps to 178-294 (HASELRLNHY…RRSVAFFLKP (117 aa)). The Fe cation site is built by histidine 206, aspartate 208, and histidine 266. Arginine 285 contributes to the 2-oxoglutarate binding site.

It belongs to the iron/ascorbate-dependent oxidoreductase family. Fe(2+) serves as cofactor.

It functions in the pathway antifungal biosynthesis. Its function is as follows. 2-oxoglutarate-dependent dioxygenase; part of the gene cluster that mediates the biosynthesis of echinocandin B, a fungal lipidated cyclic hexapeptide that acts as an antifungal agent. Linoleoyl-AMP, produced by the fatty-acyl-AMP ligase ecdI, is transferred to the initiation carrier domain (T0) of ecdA. The linoleoyl-S-phosphopantetheinyl-T0 is sequentially extended with L-ornithine, L-threonine, L-proline, L-homotyrosine, L-threonine, and 4R-methyl-L-proline to form the linear hexapeptide. Thereafter, the terminal condensation (C7) performs macrocyclization of the NRPS product and the cyclic scaffold is released from ecdA. All six of the amino acid residues are hydroxylated, including 4R,5R-dihydroxy-L-ornithine, 4R-hydroxyl-L-proline, 3S,4S-dihydroxy-L-homotyrosine, and 3S-hydroxyl-4S-methyl-L-prolin. In the pathway, all the hydroxylation reactions are proposed to occur following completion of the cyclic peptide, so the unhydroxylated precursor produced by ecdA will undergo six rounds of hydroxylation. Five hydroxylase genes (ecdG, ecdH, ecdK, htyE and htyF) are embedded within the echinocandin B (ecd) and L-homotyrosine (hty) clusters. This chain is 2-oxoglutarate-dependent dioxygenase ecdK, found in Aspergillus rugulosus (Emericella rugulosa).